A 71-amino-acid chain; its full sequence is Large ribosomal subunit protein uL29 (71 aa).

It belongs to the universal ribosomal protein uL29 family.

In Rickettsia akari (strain Hartford), this protein is Large ribosomal subunit protein uL29.